Reading from the N-terminus, the 131-residue chain is Small ribosomal subunit protein uS8 (131 aa).

The protein belongs to the universal ribosomal protein uS8 family. Part of the 30S ribosomal subunit. Contacts proteins S5 and S12.

Its function is as follows. One of the primary rRNA binding proteins, it binds directly to 16S rRNA central domain where it helps coordinate assembly of the platform of the 30S subunit. The polypeptide is Small ribosomal subunit protein uS8 (Phocaeicola vulgatus (strain ATCC 8482 / DSM 1447 / JCM 5826 / CCUG 4940 / NBRC 14291 / NCTC 11154) (Bacteroides vulgatus)).